The sequence spans 164 residues: uncharacterized protein (164 aa).

2 consecutive transmembrane segments (helical) span residues 11-31 (FYVNGFFSFLFLFLFLFPSLL) and 51-71 (CQQYSSLAIFTASGFWLLVLV).

It is found in the membrane. This is an uncharacterized protein from Saccharomyces cerevisiae (strain ATCC 204508 / S288c) (Baker's yeast).